The chain runs to 398 residues: Putative isocitrate lyase subunit B (398 aa).

This sequence belongs to the isocitrate lyase/PEP mutase superfamily. Isocitrate lyase family. Mg(2+) is required as a cofactor.

It carries out the reaction D-threo-isocitrate = glyoxylate + succinate. In terms of biological role, together with AceAa, they could catalyze the formation of succinate and glyoxylate from isocitrate. The polypeptide is Putative isocitrate lyase subunit B (aceAb) (Mycobacterium tuberculosis (strain ATCC 25618 / H37Rv)).